A 288-amino-acid polypeptide reads, in one-letter code: MFSGIGTAIITPFKNGEIDYHALKNFLETQRMVDAIILLGTTGEAPNISIEERDKLIPFVREYFPDKPLIVGVGTNSSHHTMELVKNAEKNKADALLVVTPYYNKPTQIGLYHYYKYISEHTDLEIIIYNVPGRTGVNIAPETVYKLASDCKNITALKEANSSFDQINKVLHLKPETFKVFSGNDDISFQFLASGGNGVISVASNVIPNQMVEMYKNIISGNISNARKIFYTYYPLFKALFIETNPIPVKQALNIMGLIENELRLPLYPANKETKNILEKILKECKII.

T42 is a pyruvate binding site. Y129 functions as the Proton donor/acceptor in the catalytic mechanism. Residue K158 is the Schiff-base intermediate with substrate of the active site. I200 is a pyruvate binding site.

The protein belongs to the DapA family. As to quaternary structure, homotetramer; dimer of dimers.

It is found in the cytoplasm. The catalysed reaction is L-aspartate 4-semialdehyde + pyruvate = (2S,4S)-4-hydroxy-2,3,4,5-tetrahydrodipicolinate + H2O + H(+). The protein operates within amino-acid biosynthesis; L-lysine biosynthesis via DAP pathway; (S)-tetrahydrodipicolinate from L-aspartate: step 3/4. In terms of biological role, catalyzes the condensation of (S)-aspartate-beta-semialdehyde [(S)-ASA] and pyruvate to 4-hydroxy-tetrahydrodipicolinate (HTPA). This Thermosipho melanesiensis (strain DSM 12029 / CIP 104789 / BI429) protein is 4-hydroxy-tetrahydrodipicolinate synthase.